A 196-amino-acid polypeptide reads, in one-letter code: Pyridoxal 5'-phosphate synthase subunit PdxT (196 aa).

47-49 (GES) provides a ligand contact to L-glutamine. C79 serves as the catalytic Nucleophile. L-glutamine-binding positions include R106 and 134 to 135 (IR). Active-site charge relay system residues include H170 and E172.

It belongs to the glutaminase PdxT/SNO family. In terms of assembly, in the presence of PdxS, forms a dodecamer of heterodimers. Only shows activity in the heterodimer.

It carries out the reaction aldehydo-D-ribose 5-phosphate + D-glyceraldehyde 3-phosphate + L-glutamine = pyridoxal 5'-phosphate + L-glutamate + phosphate + 3 H2O + H(+). The enzyme catalyses L-glutamine + H2O = L-glutamate + NH4(+). The protein operates within cofactor biosynthesis; pyridoxal 5'-phosphate biosynthesis. Functionally, catalyzes the hydrolysis of glutamine to glutamate and ammonia as part of the biosynthesis of pyridoxal 5'-phosphate. The resulting ammonia molecule is channeled to the active site of PdxS. The polypeptide is Pyridoxal 5'-phosphate synthase subunit PdxT (Bacillus cytotoxicus (strain DSM 22905 / CIP 110041 / 391-98 / NVH 391-98)).